Consider the following 335-residue polypeptide: Protein-arginine N-acetylglucosaminyltransferase SseK3 (335 aa).

Residues 51 to 53 (QWF) and tyrosine 75 each bind UDP-N-acetyl-alpha-D-glucosamine. N-beta-linked (GlcNAc) arginine; by autocatalysis glycans are attached at residues arginine 153 and arginine 184. Residue 224–227 (YLDA) participates in UDP-N-acetyl-alpha-D-glucosamine binding. Positions 226 to 228 (DAD) match the DXD motif motif. Residue aspartate 228 coordinates Mn(2+). Catalysis depends on glutamate 258, which acts as the Proton acceptor. N-beta-linked (GlcNAc) arginine; by autocatalysis glycosylation is present at arginine 305. Mn(2+) is bound by residues aspartate 325 and serine 327. Residues serine 327 and 332 to 335 (SSWR) each bind UDP-N-acetyl-alpha-D-glucosamine. Arginine 335 carries N-beta-linked (GlcNAc) arginine; by autocatalysis glycosylation.

It belongs to the glycosyltransferase NleB family. As to quaternary structure, interacts with host TRIM32; without mediating its GlcNAcylation. The cofactor is Mn(2+). Auto-glycosylated: arginine GlcNAcylation is required for activity toward death domain-containing host target proteins.

The protein localises to the secreted. It is found in the host Golgi apparatus. The catalysed reaction is L-arginyl-[protein] + UDP-N-acetyl-alpha-D-glucosamine = N(omega)-(N-acetyl-beta-D-glucosaminyl)-L-arginyl-[protein] + UDP + H(+). Its function is as follows. Protein-arginine N-acetylglucosaminyltransferase effector that disrupts TNF signaling in infected cells, including NF-kappa-B signaling and apoptosis. Acts by catalyzing the transfer of a single N-acetylglucosamine (GlcNAc) to a conserved arginine residue in the death domain of host proteins such as TRADD, TNFRSF1A/TNFR1 and TNFRSF10B/TRAILR2: arginine GlcNAcylation prevents homotypic/heterotypic death domain interactions and assembly of the oligomeric TNF-alpha receptor complex, thereby disrupting TNF signaling. Also acts on host proteins without a death domain: catalyzes arginine GlcNAcylation of host small Rab GTPase (Rab1, Rab5 and Rab11), thereby preventing GTPase activity and leading to impaired host vesicular protein transport. Also mediates auto-GlcNAcylation, which is required for activity toward death domain-containing host target proteins. This chain is Protein-arginine N-acetylglucosaminyltransferase SseK3, found in Salmonella typhimurium (strain SL1344).